The primary structure comprises 198 residues: Photosystem I assembly protein Ycf4 (198 aa).

Residues 1 to 20 (MTASTTINKGDSPNGDSSAS) form a disordered region. Transmembrane regions (helical) follow at residues 38-58 (WASI…SSYL) and 78-98 (LVMG…WLAI).

It belongs to the Ycf4 family.

It localises to the cellular thylakoid membrane. Its function is as follows. Seems to be required for the assembly of the photosystem I complex. The sequence is that of Photosystem I assembly protein Ycf4 from Trichormus variabilis (strain ATCC 29413 / PCC 7937) (Anabaena variabilis).